Reading from the N-terminus, the 55-residue chain is ATP synthase F(0) complex subunit 8 (55 aa).

The chain crosses the membrane as a helical span at residues 7–29 (NPWFYIMLMSWLTFSLIIQPELL).

The protein belongs to the ATPase protein 8 family. Component of the ATP synthase complex composed at least of ATP5F1A/subunit alpha, ATP5F1B/subunit beta, ATP5MC1/subunit c (homooctomer), MT-ATP6/subunit a, MT-ATP8/subunit 8, ATP5ME/subunit e, ATP5MF/subunit f, ATP5MG/subunit g, ATP5MK/subunit k, ATP5MJ/subunit j, ATP5F1C/subunit gamma, ATP5F1D/subunit delta, ATP5F1E/subunit epsilon, ATP5PF/subunit F6, ATP5PB/subunit b, ATP5PD/subunit d, ATP5PO/subunit OSCP. ATP synthase complex consists of a soluble F(1) head domain (subunits alpha(3) and beta(3)) - the catalytic core - and a membrane F(0) domain - the membrane proton channel (subunits c, a, 8, e, f, g, k and j). These two domains are linked by a central stalk (subunits gamma, delta, and epsilon) rotating inside the F1 region and a stationary peripheral stalk (subunits F6, b, d, and OSCP).

The protein localises to the mitochondrion membrane. Its function is as follows. Subunit 8, of the mitochondrial membrane ATP synthase complex (F(1)F(0) ATP synthase or Complex V) that produces ATP from ADP in the presence of a proton gradient across the membrane which is generated by electron transport complexes of the respiratory chain. ATP synthase complex consist of a soluble F(1) head domain - the catalytic core - and a membrane F(1) domain - the membrane proton channel. These two domains are linked by a central stalk rotating inside the F(1) region and a stationary peripheral stalk. During catalysis, ATP synthesis in the catalytic domain of F(1) is coupled via a rotary mechanism of the central stalk subunits to proton translocation. In vivo, can only synthesize ATP although its ATP hydrolase activity can be activated artificially in vitro. Part of the complex F(0) domain. This chain is ATP synthase F(0) complex subunit 8, found in Musophaga violacea (Violet turaco).